The sequence spans 253 residues: MRILLSNDDGVHAPGIQTLAKALREFADVQVVAPDRNRSGASNSLTLESSLRTFTFENGDIAVQMGTPTDCVYLGVNALMRPRPDIVVSGINAGPNLGDDVIYSGTVAAAMEGRHLGFPALAVSLDGHKHYDTAAAVTCSILRALCKEPLRTGRILNINVPDLPLDQIKGIRVTRCGTRHPADQVIPQQDPRGNTLYWIGPPGGKCDAGPGTDFAAVDEGYVSITPLHVDLTAHSAQDVVSDWLNSVGVGTQW.

Residues D8, D9, S39, and N92 each contribute to the a divalent metal cation site.

Belongs to the SurE nucleotidase family. A divalent metal cation serves as cofactor.

It is found in the cytoplasm. It carries out the reaction a ribonucleoside 5'-phosphate + H2O = a ribonucleoside + phosphate. The enzyme catalyses a ribonucleoside 3'-phosphate + H2O = a ribonucleoside + phosphate. It catalyses the reaction [phosphate](n) + H2O = [phosphate](n-1) + phosphate + H(+). In terms of biological role, nucleotidase with a broad substrate specificity as it can dephosphorylate various ribo- and deoxyribonucleoside 5'-monophosphates and ribonucleoside 3'-monophosphates with highest affinity to 3'-AMP. Also hydrolyzes polyphosphate (exopolyphosphatase activity) with the preference for short-chain-length substrates (P20-25). Might be involved in the regulation of dNTP and NTP pools, and in the turnover of 3'-mononucleotides produced by numerous intracellular RNases (T1, T2, and F) during the degradation of various RNAs. This chain is 5'/3'-nucleotidase SurE, found in Shigella boydii serotype 18 (strain CDC 3083-94 / BS512).